We begin with the raw amino-acid sequence, 284 residues long: Transmembrane protein 163b (284 aa).

The disordered stretch occupies residues 1 to 44 (MTDSSSASDPTAGPVDPGPAPSAPDPALEDPASTPANGHHPNQA). Topologically, residues 1 to 83 (MTDSSSASDP…HEAQSYRKKA (83 aa)) are cytoplasmic. Residues 84 to 104 (LWVSWVSIVVTMILAIAAFTV) form a helical membrane-spanning segment. Residues 105 to 111 (SIMRHSA) lie on the Extracellular side of the membrane. The helical transmembrane segment at 112-132 (SAFGFAFDATLDVLSSIIVLW) threads the bilayer. The Cytoplasmic portion of the chain corresponds to 133-145 (RYSNAAAVHSAHR). The helical transmembrane segment at 146–166 (EYIACVILGVVFILSAITILV) threads the bilayer. Topologically, residues 167–182 (KAIHDLATKLEPEVDD) are extracellular. Residues 183–203 (FLYSVSVISGVVCTVLCVCKF) traverse the membrane as a helical segment. Over 204–212 (MLGKVLTSR) the chain is Cytoplasmic. A helical membrane pass occupies residues 213–233 (ALITDGFNSLVGGVMGFSILI). The Extracellular portion of the chain corresponds to 234–243 (SAEVFKHEPS). A helical transmembrane segment spans residues 244–264 (VWFLDGTIGILIGLIILAYGV). Residues 265 to 284 (KLLKDMVPRIRQTRHYERFE) are Cytoplasmic-facing.

The protein belongs to the TMEM163 family.

The protein resides in the cytoplasmic vesicle. Its subcellular location is the secretory vesicle. It localises to the synaptic vesicle membrane. The protein localises to the early endosome membrane. It is found in the late endosome membrane. The protein resides in the lysosome membrane. Its subcellular location is the cell membrane. It carries out the reaction Zn(2+)(in) = Zn(2+)(out). In terms of biological role, zinc ion transporter that mediates zinc efflux and plays a crucial role in intracellular zinc homeostasis. Binds the divalent cations Zn(2+), Ni(2+), and to a minor extent Cu(2+). Is a functional modulator of P2X purinoceptors, including P2RX1, P2RX3, P2RX4 and P2RX7. Plays a role in central nervous system development and is required for myelination, and survival and proliferation of oligodendrocytes. This Danio rerio (Zebrafish) protein is Transmembrane protein 163b.